Consider the following 295-residue polypeptide: Acetyl-coenzyme A carboxylase carboxyl transferase subunit beta (295 aa).

Residues 1-20 are disordered; sequence MSWLSKLMPSGIRTENTPAK. A CoA carboxyltransferase N-terminal domain is found at 28-295; the sequence is LWEKCSNCGS…QPHPQDADAA (268 aa). Positions 32, 35, 51, and 54 each coordinate Zn(2+). Residues 32–54 form a C4-type zinc finger; that stretch reads CSNCGSALYGPELEENLEVCPKC.

It belongs to the AccD/PCCB family. In terms of assembly, acetyl-CoA carboxylase is a heterohexamer composed of biotin carboxyl carrier protein (AccB), biotin carboxylase (AccC) and two subunits each of ACCase subunit alpha (AccA) and ACCase subunit beta (AccD). Requires Zn(2+) as cofactor.

Its subcellular location is the cytoplasm. The enzyme catalyses N(6)-carboxybiotinyl-L-lysyl-[protein] + acetyl-CoA = N(6)-biotinyl-L-lysyl-[protein] + malonyl-CoA. It participates in lipid metabolism; malonyl-CoA biosynthesis; malonyl-CoA from acetyl-CoA: step 1/1. Functionally, component of the acetyl coenzyme A carboxylase (ACC) complex. Biotin carboxylase (BC) catalyzes the carboxylation of biotin on its carrier protein (BCCP) and then the CO(2) group is transferred by the transcarboxylase to acetyl-CoA to form malonyl-CoA. The protein is Acetyl-coenzyme A carboxylase carboxyl transferase subunit beta of Xanthomonas oryzae pv. oryzae (strain MAFF 311018).